Reading from the N-terminus, the 474-residue chain is Dihydrolipoyl dehydrogenase (474 aa).

FAD is bound by residues 36–44 (EAKDMGGTC), Lys53, and Gly119. Cys44 and Cys49 are oxidised to a cystine. NAD(+) contacts are provided by residues 184 to 188 (GSGYI), Glu207, and 275 to 278 (ATGR). FAD-binding residues include Asp323 and Ala331. The active-site Proton acceptor is His459.

This sequence belongs to the class-I pyridine nucleotide-disulfide oxidoreductase family. As to quaternary structure, homodimer. The cofactor is FAD.

The protein localises to the cell inner membrane. It carries out the reaction N(6)-[(R)-dihydrolipoyl]-L-lysyl-[protein] + NAD(+) = N(6)-[(R)-lipoyl]-L-lysyl-[protein] + NADH + H(+). Functionally, lipoamide dehydrogenase is a component of the alpha-ketoacid dehydrogenase complexes. The chain is Dihydrolipoyl dehydrogenase (lpdA) from Synechocystis sp. (strain ATCC 27184 / PCC 6803 / Kazusa).